A 403-amino-acid chain; its full sequence is tRNA pseudouridine synthase D (403 aa).

Over residues 1-10 (MTVQVQDHDI) the composition is skewed to basic and acidic residues. Positions 1-24 (MTVQVQDHDITTAADTAKLPQPMQ) are disordered. Asp92 acts as the Nucleophile in catalysis. The 163-residue stretch at 192 to 354 (GVPNYFGPQR…IKAQRRALRL (163 aa)) folds into the TRUD domain. The interval 217 to 240 (ARPVPESRPQPNKGKRKRVPREQN) is disordered.

This sequence belongs to the pseudouridine synthase TruD family.

The catalysed reaction is uridine(13) in tRNA = pseudouridine(13) in tRNA. Functionally, responsible for synthesis of pseudouridine from uracil-13 in transfer RNAs. In Psychrobacter arcticus (strain DSM 17307 / VKM B-2377 / 273-4), this protein is tRNA pseudouridine synthase D.